A 200-amino-acid chain; its full sequence is ATP-dependent Clp protease proteolytic subunit (200 aa).

Ser101 acts as the Nucleophile in catalysis. The active site involves His126.

It belongs to the peptidase S14 family. Component of the chloroplastic Clp protease core complex.

The protein localises to the plastid. It localises to the chloroplast stroma. The enzyme catalyses Hydrolysis of proteins to small peptides in the presence of ATP and magnesium. alpha-casein is the usual test substrate. In the absence of ATP, only oligopeptides shorter than five residues are hydrolyzed (such as succinyl-Leu-Tyr-|-NHMec, and Leu-Tyr-Leu-|-Tyr-Trp, in which cleavage of the -Tyr-|-Leu- and -Tyr-|-Trp bonds also occurs).. Cleaves peptides in various proteins in a process that requires ATP hydrolysis. Has a chymotrypsin-like activity. Plays a major role in the degradation of misfolded proteins. In Ostreococcus tauri, this protein is ATP-dependent Clp protease proteolytic subunit.